The primary structure comprises 1002 residues: Collagen alpha-2(I) chain (1002 aa).

Residues 1–1002 (SGGFDFSFLP…PGPPGPPGAS (1002 aa)) are disordered. P10, P13, P28, and P34 each carry 4-hydroxyproline. The span at 17 to 60 (GPMGLMGPRGPPGASGAPGPQGFQGPAGEPGEPGQTGPAGARGP) shows a compositional bias: low complexity. Residue K89 is modified to 5-hydroxylysine; alternate. A glycan (O-linked (Gal...) hydroxylysine; alternate) is linked at K89. Composition is skewed to low complexity over residues 145–166 (SRGS…SAGP) and 211–232 (PGAN…AGAP). The span at 266-275 (GESGGKGEPG) shows a compositional bias: gly residues. Over residues 276 to 286 (SAGPQGPPGSS) the composition is skewed to low complexity. Residues 308–317 (GLRGGPGSRG) are compositionally biased toward gly residues. Positions 330 to 346 (PAGARGASGPAGVRGPS) are enriched in low complexity. P352 and P355 each carry 4-hydroxyproline. Residues 381–400 (LPGIDGRPGPIGPAGARGEA) are compositionally biased toward low complexity. Positions 449–458 (GVQGGKGEQG) are enriched in gly residues. 2 stretches are compositionally biased toward low complexity: residues 505–522 (PGES…SRGP) and 534–544 (EPGVVGAPGTA). A compositionally biased stretch (gly residues) spans 545–554 (GPAGSGGLPG). Composition is skewed to low complexity over residues 577–621 (VGTT…PRGS) and 628–648 (VGPA…QPGA). The span at 649 to 658 (KGERGTKGPK) shows a compositional bias: basic and acidic residues. Residues 666-676 (PTGPVGSAGPA) are compositionally biased toward low complexity. Residues 686 to 695 (GSRGDGGPPG) are compositionally biased toward gly residues. Positions 697–706 (TGFPGAAGRT) are enriched in low complexity. The segment covering 743–752 (GETGAGGPPG) has biased composition (gly residues). Composition is skewed to low complexity over residues 760-787 (SGEP…LGLP) and 795-805 (LPGVAGAVGEP). Residues 806–828 (GPLGIGPPGARGPSGGVGPGVNG) are compositionally biased toward gly residues. Residues 833 to 851 (AGRDGPPGRDGLPGHKGER) are compositionally biased toward basic and acidic residues. Positions 853 to 898 (YAGNAGPVGAAGAPGPHGAVGPAGKHGNRGEPGPVGSAGPVGALGP) are enriched in low complexity. The span at 908-919 (RGDKGEAGDKGP) shows a compositional bias: basic and acidic residues. The segment covering 987–1002 (SGPPGPPGPPGPPGAS) has biased composition (pro residues).

This sequence belongs to the fibrillar collagen family. As to quaternary structure, trimers of one alpha 2(I) and two alpha 1(I) chains. Interacts (via C-terminus) with TMEM131 (via PapD-L domain); the interaction is direct and is involved in assembly and TRAPPIII ER-to-Golgi transport complex-dependent secretion of collagen. In terms of processing, prolines at the third position of the tripeptide repeating unit (G-X-Y) are hydroxylated in some or all of the chains. As to expression, expressed in bones.

The protein resides in the secreted. It is found in the extracellular space. It localises to the extracellular matrix. Type I collagen is a member of group I collagen (fibrillar forming collagen). The sequence is that of Collagen alpha-2(I) chain from Glossotherium robustum (Ground sloth).